A 166-amino-acid chain; its full sequence is Crossover junction endodeoxyribonuclease RuvC (166 aa).

Active-site residues include Asp7, Glu67, and Asp140. Asp7, Glu67, and Asp140 together coordinate Mg(2+).

It belongs to the RuvC family. In terms of assembly, homodimer which binds Holliday junction (HJ) DNA. The HJ becomes 2-fold symmetrical on binding to RuvC with unstacked arms; it has a different conformation from HJ DNA in complex with RuvA. In the full resolvosome a probable DNA-RuvA(4)-RuvB(12)-RuvC(2) complex forms which resolves the HJ. It depends on Mg(2+) as a cofactor.

The protein localises to the cytoplasm. The enzyme catalyses Endonucleolytic cleavage at a junction such as a reciprocal single-stranded crossover between two homologous DNA duplexes (Holliday junction).. Its function is as follows. The RuvA-RuvB-RuvC complex processes Holliday junction (HJ) DNA during genetic recombination and DNA repair. Endonuclease that resolves HJ intermediates. Cleaves cruciform DNA by making single-stranded nicks across the HJ at symmetrical positions within the homologous arms, yielding a 5'-phosphate and a 3'-hydroxyl group; requires a central core of homology in the junction. The consensus cleavage sequence is 5'-(A/T)TT(C/G)-3'. Cleavage occurs on the 3'-side of the TT dinucleotide at the point of strand exchange. HJ branch migration catalyzed by RuvA-RuvB allows RuvC to scan DNA until it finds its consensus sequence, where it cleaves and resolves the cruciform DNA. This is Crossover junction endodeoxyribonuclease RuvC from Brevibacillus brevis (strain 47 / JCM 6285 / NBRC 100599).